Consider the following 375-residue polypeptide: Chaperone protein DnaJ (375 aa).

Residues 5–70 (DYYEVLGVAR…NKRRAYDAHG (66 aa)) enclose the J domain. Residues 131 to 208 (GIERRIEIPT…CHGAGRVEED (78 aa)) form a CR-type zinc finger. The Zn(2+) site is built by cysteine 144, cysteine 147, cysteine 160, cysteine 163, cysteine 182, cysteine 185, cysteine 196, and cysteine 199. 4 CXXCXGXG motif repeats span residues 144 to 151 (CAPCHGSG), 160 to 167 (CGTCHGRG), 182 to 189 (CPHCDGRG), and 196 to 203 (CKTCHGAG).

It belongs to the DnaJ family. As to quaternary structure, homodimer. Requires Zn(2+) as cofactor.

Its subcellular location is the cytoplasm. Participates actively in the response to hyperosmotic and heat shock by preventing the aggregation of stress-denatured proteins and by disaggregating proteins, also in an autonomous, DnaK-independent fashion. Unfolded proteins bind initially to DnaJ; upon interaction with the DnaJ-bound protein, DnaK hydrolyzes its bound ATP, resulting in the formation of a stable complex. GrpE releases ADP from DnaK; ATP binding to DnaK triggers the release of the substrate protein, thus completing the reaction cycle. Several rounds of ATP-dependent interactions between DnaJ, DnaK and GrpE are required for fully efficient folding. Also involved, together with DnaK and GrpE, in the DNA replication of plasmids through activation of initiation proteins. The protein is Chaperone protein DnaJ of Xanthomonas axonopodis pv. citri (strain 306).